Here is a 295-residue protein sequence, read N- to C-terminus: Tyrosine recombinase XerD (295 aa).

Residues 1-85 form the Core-binding (CB) domain; sequence METIIEEYLR…TIRSFHQFAI (85 aa). The Tyr recombinase domain maps to 106 to 289; the sequence is KLPDVLNVDE…SKSQIRKMYN (184 aa). Residues Arg-146, Lys-170, His-241, Arg-244, and His-267 contribute to the active site. The active-site O-(3'-phospho-DNA)-tyrosine intermediate is the Tyr-276.

The protein belongs to the 'phage' integrase family. XerD subfamily. In terms of assembly, forms a cyclic heterotetrameric complex composed of two molecules of XerC and two molecules of XerD.

The protein resides in the cytoplasm. In terms of biological role, site-specific tyrosine recombinase, which acts by catalyzing the cutting and rejoining of the recombining DNA molecules. The XerC-XerD complex is essential to convert dimers of the bacterial chromosome into monomers to permit their segregation at cell division. It also contributes to the segregational stability of plasmids. The chain is Tyrosine recombinase XerD from Staphylococcus aureus (strain COL).